A 534-amino-acid chain; its full sequence is Glycerol kinase 5 (534 aa).

Ser-33 and Thr-34 together coordinate ATP. Residues Arg-103, Asp-280, and Gln-281 each contribute to the glycerol site. Positions 302, 345, and 445 each coordinate ATP.

Belongs to the FGGY kinase family. In terms of tissue distribution, expressed predominantly in sebaceous glands.

The protein resides in the cytoplasm. It carries out the reaction glycerol + ATP = sn-glycerol 3-phosphate + ADP + H(+). It participates in polyol metabolism; glycerol degradation via glycerol kinase pathway; sn-glycerol 3-phosphate from glycerol: step 1/1. Its function is as follows. Skin-specific kinase that plays a key role in glycerol metabolism, catalyzing its phosphorylation to produce sn-glycerol 3-phosphate. Involved in skin-specific regulation of sterol regulatory element-binding protein (SREBP) processing and lipid biosynthesis. This Mus musculus (Mouse) protein is Glycerol kinase 5 (Gk5).